A 69-amino-acid polypeptide reads, in one-letter code: Large ribosomal subunit protein bL31 (69 aa).

Cys17, Cys19, Cys37, and Cys40 together coordinate Zn(2+).

The protein belongs to the bacterial ribosomal protein bL31 family. Type A subfamily. As to quaternary structure, part of the 50S ribosomal subunit. Zn(2+) serves as cofactor.

Functionally, binds the 23S rRNA. This is Large ribosomal subunit protein bL31 from Thermoanaerobacter pseudethanolicus (strain ATCC 33223 / 39E) (Clostridium thermohydrosulfuricum).